Here is a 357-residue protein sequence, read N- to C-terminus: Spore wall and anchoring disk complex protein EnP1 (357 aa).

The signal sequence occupies residues 1-16 (MKLLGFLIVGLSAISA). Asparagine 47 carries an N-linked (GlcNAc...) asparagine glycan. The HBM1 motif lies at 150 to 158 (ERRPHYKKI). Residues 329–334 (LKKVRG) carry the HBM2 motif.

It is found in the spore wall. Its subcellular location is the spore. The protein localises to the perispore. In terms of biological role, spore wall protein involved in the adhesion to host cells surface glycoaminoglycans (GAGs). Microsporidian spore adherence is an integral part of activation and host cell invasion which requires the extrusion at the spore apex of a very long and coiled structure, the polar tube, through which the sporoplasm is pushed to enter into the potential host cell. This chain is Spore wall and anchoring disk complex protein EnP1 (EnP1), found in Encephalitozoon cuniculi (strain GB-M1) (Microsporidian parasite).